We begin with the raw amino-acid sequence, 618 residues long: MTAPNRNTLWARALIDELVAAGVDAVVASPGSRSTPLTVAAARTDDLRVFSQLDERSAAYFALGRARRTGKVTPLICTSGTAAANYHPAVMEASEARVPLLALTADRPPELRDSGANQTADQEKLYGDAVRFYKDLPEPAPNDRALRSLRTTVARAVGTAEGADPGPVHLNVPFKKPLEPTRVLDDVPADLDPVAERGRDGPYVDVTPGSPEPGDDALRRLGNELMTTDRGLIVAGPADPPGLDAEAVTALSHATGFPILADPLSGVRFGGHTRVAPVIGAYDAYLSAEVAGEAGDADASDSWNDPEVVLRLGASPTSKRLRKYLAETGADQYQVDPAGRWREAEFAATDLVVAEPSRLCARLSRLVAGGDGDADWRAQWEDADRVAQEIHGRERDGDIPADDEPVEFHEGDALRVVADALPDPATLFVSNSMPVRDLDRFVGPTTTSVTALGNRGVSGIDGIVSSALGAGSATTDDLTLVVGDLALYHDTNGLLALDRCDVDATVVLINNDGGGIFHELPIESFEPEFTESFKTPHGIEFEPMADLHGLAYTRIDARPDSVESAGNVADDLADAYTGARDADGSHLIEVRTDAESSHRTRKRLEAAVDRAVHGDEAE.

The disordered stretch occupies residues 192-215 (DPVAERGRDGPYVDVTPGSPEPGD).

The protein belongs to the TPP enzyme family. MenD subfamily. In terms of assembly, homodimer. Mg(2+) is required as a cofactor. Requires Mn(2+) as cofactor. It depends on thiamine diphosphate as a cofactor.

The catalysed reaction is isochorismate + 2-oxoglutarate + H(+) = 5-enolpyruvoyl-6-hydroxy-2-succinyl-cyclohex-3-ene-1-carboxylate + CO2. It functions in the pathway quinol/quinone metabolism; 1,4-dihydroxy-2-naphthoate biosynthesis; 1,4-dihydroxy-2-naphthoate from chorismate: step 2/7. The protein operates within quinol/quinone metabolism; menaquinone biosynthesis. Functionally, catalyzes the thiamine diphosphate-dependent decarboxylation of 2-oxoglutarate and the subsequent addition of the resulting succinic semialdehyde-thiamine pyrophosphate anion to isochorismate to yield 2-succinyl-5-enolpyruvyl-6-hydroxy-3-cyclohexene-1-carboxylate (SEPHCHC). The sequence is that of 2-succinyl-5-enolpyruvyl-6-hydroxy-3-cyclohexene-1-carboxylate synthase from Halorubrum lacusprofundi (strain ATCC 49239 / DSM 5036 / JCM 8891 / ACAM 34).